The following is a 215-amino-acid chain: Small ribosomal subunit protein eS1 (215 aa).

The protein belongs to the eukaryotic ribosomal protein eS1 family.

The sequence is that of Small ribosomal subunit protein eS1 from Halorubrum lacusprofundi (strain ATCC 49239 / DSM 5036 / JCM 8891 / ACAM 34).